A 214-amino-acid chain; its full sequence is Adenylate kinase (214 aa).

An ATP-binding site is contributed by 10–15; the sequence is GAGKGT. Residues 30 to 59 form an NMP region; sequence STGDMLRAAVKAGTPLGLEAKKVMDAGQLV. AMP is bound by residues Thr31, Arg36, 57 to 59, 85 to 88, and Gln92; these read QLV and GFPR. The LID stretch occupies residues 122–159; it reads GRRVHSGSGRVYHVVFNPPKVEGKDDVTGEDLSIRPDD. ATP is bound by residues Arg123 and 132 to 133; that span reads VY. Residues Arg156 and Arg167 each coordinate AMP. Gln200 is an ATP binding site.

Belongs to the adenylate kinase family. In terms of assembly, monomer.

It localises to the cytoplasm. The enzyme catalyses AMP + ATP = 2 ADP. It functions in the pathway purine metabolism; AMP biosynthesis via salvage pathway; AMP from ADP: step 1/1. In terms of biological role, catalyzes the reversible transfer of the terminal phosphate group between ATP and AMP. Plays an important role in cellular energy homeostasis and in adenine nucleotide metabolism. This chain is Adenylate kinase, found in Shewanella denitrificans (strain OS217 / ATCC BAA-1090 / DSM 15013).